The sequence spans 873 residues: Alanine--tRNA ligase (873 aa).

Positions 562, 566, 663, and 667 each coordinate Zn(2+).

The protein belongs to the class-II aminoacyl-tRNA synthetase family. It depends on Zn(2+) as a cofactor.

The protein localises to the cytoplasm. The enzyme catalyses tRNA(Ala) + L-alanine + ATP = L-alanyl-tRNA(Ala) + AMP + diphosphate. Catalyzes the attachment of alanine to tRNA(Ala) in a two-step reaction: alanine is first activated by ATP to form Ala-AMP and then transferred to the acceptor end of tRNA(Ala). Also edits incorrectly charged Ser-tRNA(Ala) and Gly-tRNA(Ala) via its editing domain. This Bordetella avium (strain 197N) protein is Alanine--tRNA ligase.